Reading from the N-terminus, the 470-residue chain is Box C/D snoRNA protein 1 (470 aa).

Residues 1-70 (MEFAAENEGK…EEGSGQRPEE (70 aa)) form a disordered region. A Phosphoserine modification is found at S25. The segment covering 41–51 (EFGGGEEGTGL) has biased composition (gly residues). Residues K79, K108, K118, K138, K143, K153, K162, K173, K183, and K200 each participate in a glycyl lysine isopeptide (Lys-Gly) (interchain with G-Cter in SUMO2) cross-link. Zn(2+) contacts are provided by C220, C223, C232, C235, C240, C244, H248, and C254. An HIT-type zinc finger spans residues 220–254 (CETCGTEEAKYRCPRCMRYSCSLPCVKKHKAELTC). K459 participates in a covalent cross-link: Glycyl lysine isopeptide (Lys-Gly) (interchain with G-Cter in SUMO2).

This sequence belongs to the BCD1 family. Interacts with FBL, SNU13, NOP58, NUFIP1, RUVBL1, RUVBL2 and TAF9. Interacts (via HIT-type zinc finger) with the RUVBL1/RUVBL2 complex in the presence of ADP.

Required for box C/D snoRNAs accumulation involved in snoRNA processing, snoRNA transport to the nucleolus and ribosome biogenesis. The protein is Box C/D snoRNA protein 1 (ZNHIT6) of Homo sapiens (Human).